Reading from the N-terminus, the 545-residue chain is Membrane protein insertase YidC (545 aa).

The next 4 helical transmembrane spans lie at 350–370 (IIGN…AVLY), 424–444 (LPML…FASV), 461–481 (ADPY…QTYL), and 498–518 (PLVF…YWVV).

It belongs to the OXA1/ALB3/YidC family. Type 1 subfamily. As to quaternary structure, interacts with the Sec translocase complex via SecD. Specifically interacts with transmembrane segments of nascent integral membrane proteins during membrane integration.

The protein resides in the cell inner membrane. In terms of biological role, required for the insertion and/or proper folding and/or complex formation of integral membrane proteins into the membrane. Involved in integration of membrane proteins that insert both dependently and independently of the Sec translocase complex, as well as at least some lipoproteins. Aids folding of multispanning membrane proteins. The protein is Membrane protein insertase YidC of Neisseria meningitidis serogroup B (strain ATCC BAA-335 / MC58).